Here is a 603-residue protein sequence, read N- to C-terminus: Elongation factor 4 (603 aa).

In terms of domain architecture, tr-type G spans 7–189 (SRIRNFSIIA…SIVHLVPPPE (183 aa)). GTP is bound by residues 19–24 (DHGKST) and 136–139 (NKID).

This sequence belongs to the TRAFAC class translation factor GTPase superfamily. Classic translation factor GTPase family. LepA subfamily.

The protein localises to the cell inner membrane. The enzyme catalyses GTP + H2O = GDP + phosphate + H(+). Functionally, required for accurate and efficient protein synthesis under certain stress conditions. May act as a fidelity factor of the translation reaction, by catalyzing a one-codon backward translocation of tRNAs on improperly translocated ribosomes. Back-translocation proceeds from a post-translocation (POST) complex to a pre-translocation (PRE) complex, thus giving elongation factor G a second chance to translocate the tRNAs correctly. Binds to ribosomes in a GTP-dependent manner. The polypeptide is Elongation factor 4 (Acaryochloris marina (strain MBIC 11017)).